The sequence spans 97 residues: uncharacterized protein (97 aa).

A compositionally biased stretch (basic and acidic residues) spans 1-20 (MAKEQTDRTTLDLFAHERRP). Residues 1-30 (MAKEQTDRTTLDLFAHERRPGRPKTNPLSR) form a disordered region.

This is an uncharacterized protein from Escherichia coli O157:H7.